Reading from the N-terminus, the 184-residue chain is Adenine phosphoribosyltransferase (184 aa).

The protein belongs to the purine/pyrimidine phosphoribosyltransferase family. Homodimer.

Its subcellular location is the cytoplasm. The enzyme catalyses AMP + diphosphate = 5-phospho-alpha-D-ribose 1-diphosphate + adenine. The protein operates within purine metabolism; AMP biosynthesis via salvage pathway; AMP from adenine: step 1/1. Catalyzes a salvage reaction resulting in the formation of AMP, that is energically less costly than de novo synthesis. In Corynebacterium diphtheriae (strain ATCC 700971 / NCTC 13129 / Biotype gravis), this protein is Adenine phosphoribosyltransferase.